The following is a 280-amino-acid chain: Pantothenate synthetase (280 aa).

Residue 31-38 (MGNLHAGH) coordinates ATP. His38 functions as the Proton donor in the catalytic mechanism. Gln62 lines the (R)-pantoate pocket. Position 62 (Gln62) interacts with beta-alanine. 150 to 153 (GKKD) contacts ATP. Gln156 is a binding site for (R)-pantoate. Residues Val179 and 187–190 (MSSR) contribute to the ATP site.

This sequence belongs to the pantothenate synthetase family. As to quaternary structure, homodimer.

The protein localises to the cytoplasm. It carries out the reaction (R)-pantoate + beta-alanine + ATP = (R)-pantothenate + AMP + diphosphate + H(+). The protein operates within cofactor biosynthesis; (R)-pantothenate biosynthesis; (R)-pantothenate from (R)-pantoate and beta-alanine: step 1/1. Catalyzes the condensation of pantoate with beta-alanine in an ATP-dependent reaction via a pantoyl-adenylate intermediate. This is Pantothenate synthetase from Xanthomonas euvesicatoria pv. vesicatoria (strain 85-10) (Xanthomonas campestris pv. vesicatoria).